The sequence spans 218 residues: Pyridoxine/pyridoxamine 5'-phosphate oxidase (218 aa).

Substrate-binding positions include 14–17 (RREY) and Lys-72. Residues 67–72 (RIVLLK), 82–83 (YT), Arg-88, Lys-89, and Gln-111 each bind FMN. The substrate site is built by Tyr-129, Arg-133, and Ser-137. FMN contacts are provided by residues 146-147 (QS) and Trp-191. A substrate-binding site is contributed by 197-199 (RLH). An FMN-binding site is contributed by Arg-201.

Belongs to the pyridoxamine 5'-phosphate oxidase family. In terms of assembly, homodimer. The cofactor is FMN.

It catalyses the reaction pyridoxamine 5'-phosphate + O2 + H2O = pyridoxal 5'-phosphate + H2O2 + NH4(+). It carries out the reaction pyridoxine 5'-phosphate + O2 = pyridoxal 5'-phosphate + H2O2. The protein operates within cofactor metabolism; pyridoxal 5'-phosphate salvage; pyridoxal 5'-phosphate from pyridoxamine 5'-phosphate: step 1/1. It participates in cofactor metabolism; pyridoxal 5'-phosphate salvage; pyridoxal 5'-phosphate from pyridoxine 5'-phosphate: step 1/1. Functionally, catalyzes the oxidation of either pyridoxine 5'-phosphate (PNP) or pyridoxamine 5'-phosphate (PMP) into pyridoxal 5'-phosphate (PLP). In Klebsiella pneumoniae subsp. pneumoniae (strain ATCC 700721 / MGH 78578), this protein is Pyridoxine/pyridoxamine 5'-phosphate oxidase.